We begin with the raw amino-acid sequence, 379 residues long: Glutamate 5-kinase (379 aa).

ATP is bound at residue Lys19. Ser59, Asp146, and Asn158 together coordinate substrate. 178 to 179 is an ATP binding site; it reads TD. Residues 285–363 enclose the PUA domain; sequence RGAVTVDAGA…SEFERLLGYV (79 aa).

Belongs to the glutamate 5-kinase family.

The protein localises to the cytoplasm. The enzyme catalyses L-glutamate + ATP = L-glutamyl 5-phosphate + ADP. The protein operates within amino-acid biosynthesis; L-proline biosynthesis; L-glutamate 5-semialdehyde from L-glutamate: step 1/2. In terms of biological role, catalyzes the transfer of a phosphate group to glutamate to form L-glutamate 5-phosphate. The protein is Glutamate 5-kinase of Variovorax paradoxus (strain S110).